The chain runs to 178 residues: Large ribosomal subunit protein uL6 (178 aa).

The protein belongs to the universal ribosomal protein uL6 family. As to quaternary structure, part of the 50S ribosomal subunit.

Its function is as follows. This protein binds to the 23S rRNA, and is important in its secondary structure. It is located near the subunit interface in the base of the L7/L12 stalk, and near the tRNA binding site of the peptidyltransferase center. In Thermoplasma acidophilum (strain ATCC 25905 / DSM 1728 / JCM 9062 / NBRC 15155 / AMRC-C165), this protein is Large ribosomal subunit protein uL6.